The sequence spans 408 residues: Imidazolonepropionase (408 aa).

Fe(3+)-binding residues include histidine 66 and histidine 68. Zn(2+)-binding residues include histidine 66 and histidine 68. 3 residues coordinate 4-imidazolone-5-propanoate: arginine 75, tyrosine 138, and histidine 171. An N-formimidoyl-L-glutamate-binding site is contributed by tyrosine 138. Position 236 (histidine 236) interacts with Fe(3+). Residue histidine 236 coordinates Zn(2+). Glutamine 239 contributes to the 4-imidazolone-5-propanoate binding site. Aspartate 311 serves as a coordination point for Fe(3+). Aspartate 311 is a Zn(2+) binding site. Residues asparagine 313 and glycine 315 each contribute to the N-formimidoyl-L-glutamate site. Serine 316 lines the 4-imidazolone-5-propanoate pocket.

It belongs to the metallo-dependent hydrolases superfamily. HutI family. It depends on Zn(2+) as a cofactor. Requires Fe(3+) as cofactor.

The protein resides in the cytoplasm. It carries out the reaction 4-imidazolone-5-propanoate + H2O = N-formimidoyl-L-glutamate. It participates in amino-acid degradation; L-histidine degradation into L-glutamate; N-formimidoyl-L-glutamate from L-histidine: step 3/3. Functionally, catalyzes the hydrolytic cleavage of the carbon-nitrogen bond in imidazolone-5-propanoate to yield N-formimidoyl-L-glutamate. It is the third step in the universal histidine degradation pathway. The sequence is that of Imidazolonepropionase from Idiomarina loihiensis (strain ATCC BAA-735 / DSM 15497 / L2-TR).